The sequence spans 393 residues: Beta-1,4-galactosyltransferase 3 (393 aa).

At 1 to 10 (MLRRLLERPC) the chain is on the cytoplasmic side. Residues 11–31 (TLALLVGSQLAVMMYLSLGGF) form a helical; Signal-anchor for type II membrane protein membrane-spanning segment. At 32–393 (RSLSALFGRD…ANHTALRGSH (362 aa)) the chain is on the lumenal side. N-linked (GlcNAc...) asparagine glycosylation occurs at Asn-57. Residues Cys-77 and Cys-119 are joined by a disulfide bond. A UDP-alpha-D-galactose-binding site is contributed by 130 to 134 (PHRAR). A glycan (N-linked (GlcNAc...) asparagine) is linked at Asn-166. UDP-alpha-D-galactose contacts are provided by residues 169-171 (FNR), 196-197 (VD), Tyr-226, and Trp-258. A disulfide bridge connects residues Cys-190 and Cys-209. A Mn(2+)-binding site is contributed by Asp-197. 260-263 (GEDD) serves as a coordination point for N-acetyl-D-glucosamine. His-291 contributes to the Mn(2+) binding site. 291-293 (HRG) lines the UDP-alpha-D-galactose pocket. Arg-303 lines the N-acetyl-D-glucosamine pocket. 2 N-linked (GlcNAc...) asparagine glycosylation sites follow: Asn-337 and Asn-385. Residues 339–393 (TADIGTDPRGPRAPSGPRYPPGSSQAFRQEMLQRRPPARPGPLSTANHTALRGSH) form a disordered region.

Belongs to the glycosyltransferase 7 family. Mn(2+) is required as a cofactor. As to expression, found in various tissues. Highest expression in placenta, prostate, testis, ovary, intestine and muscle, and in fetal brain.

It is found in the golgi apparatus. The protein localises to the golgi stack membrane. The catalysed reaction is an N-acetyl-beta-D-glucosaminyl derivative + UDP-alpha-D-galactose = a beta-D-galactosyl-(1-&gt;4)-N-acetyl-beta-D-glucosaminyl derivative + UDP + H(+). It carries out the reaction N-acetyl-D-glucosamine + UDP-alpha-D-galactose = beta-D-galactosyl-(1-&gt;4)-N-acetyl-D-glucosamine + UDP + H(+). The enzyme catalyses a beta-D-GlcNAc-(1-&gt;3)-beta-D-Gal-(1-&gt;4)-beta-D-Glc-(1&lt;-&gt;1)-Cer(d18:1(4E)) + UDP-alpha-D-galactose = a neolactoside nLc4Cer(d18:1(4E)) + UDP + H(+). It catalyses the reaction a beta-D-glucosylceramide + UDP-alpha-D-galactose = a beta-D-galactosyl-(1-&gt;4)-beta-D-glucosyl-(1&lt;-&gt;1)-ceramide + UDP + H(+). The catalysed reaction is a neolactoside IV(3)-beta-GlcNAc-nLc4Cer + UDP-alpha-D-galactose = a neolactoside nLc6Cer + UDP + H(+). It functions in the pathway protein modification; protein glycosylation. In terms of biological role, responsible for the synthesis of complex-type N-linked oligosaccharides in many glycoproteins as well as the carbohydrate moieties of glycolipids. The polypeptide is Beta-1,4-galactosyltransferase 3 (Homo sapiens (Human)).